Consider the following 166-residue polypeptide: 2-amino-4-hydroxy-6-hydroxymethyldihydropteridine pyrophosphokinase (166 aa).

The protein belongs to the HPPK family.

It catalyses the reaction 6-hydroxymethyl-7,8-dihydropterin + ATP = (7,8-dihydropterin-6-yl)methyl diphosphate + AMP + H(+). It participates in cofactor biosynthesis; tetrahydrofolate biosynthesis; 2-amino-4-hydroxy-6-hydroxymethyl-7,8-dihydropteridine diphosphate from 7,8-dihydroneopterin triphosphate: step 4/4. Functionally, catalyzes the transfer of pyrophosphate from adenosine triphosphate (ATP) to 6-hydroxymethyl-7,8-dihydropterin, an enzymatic step in folate biosynthesis pathway. The sequence is that of 2-amino-4-hydroxy-6-hydroxymethyldihydropteridine pyrophosphokinase (folK) from Streptococcus pyogenes serotype M18 (strain MGAS8232).